The chain runs to 394 residues: 3-dehydroquinate synthase (394 aa).

Residues 112–116, 136–137, Lys-149, Lys-158, and 176–179 contribute to the NAD(+) site; these read GVIGD, TT, and TLAT. Residues Glu-191, His-254, and His-276 each contribute to the Zn(2+) site. Positions 371-388 are enriched in polar residues; sequence STNQHTTYSPHQHATTKP. The segment at 371–394 is disordered; the sequence is STNQHTTYSPHQHATTKPPNRRPH.

Belongs to the sugar phosphate cyclases superfamily. Dehydroquinate synthase family. NAD(+) is required as a cofactor. Co(2+) serves as cofactor. Requires Zn(2+) as cofactor.

The protein localises to the cytoplasm. The catalysed reaction is 7-phospho-2-dehydro-3-deoxy-D-arabino-heptonate = 3-dehydroquinate + phosphate. The protein operates within metabolic intermediate biosynthesis; chorismate biosynthesis; chorismate from D-erythrose 4-phosphate and phosphoenolpyruvate: step 2/7. Functionally, catalyzes the conversion of 3-deoxy-D-arabino-heptulosonate 7-phosphate (DAHP) to dehydroquinate (DHQ). The protein is 3-dehydroquinate synthase of Xylella fastidiosa (strain 9a5c).